A 281-amino-acid chain; its full sequence is Pantothenate synthetase (281 aa).

ATP is bound at residue 30-37 (MGALHAGH). Residue H37 is the Proton donor of the active site. Q64 contacts (R)-pantoate. Q64 is a binding site for beta-alanine. 150 to 153 (GKKD) lines the ATP pocket. Q156 is a (R)-pantoate binding site. ATP contacts are provided by residues V179 and 187–190 (YSSR).

This sequence belongs to the pantothenate synthetase family. In terms of assembly, homodimer.

Its subcellular location is the cytoplasm. The catalysed reaction is (R)-pantoate + beta-alanine + ATP = (R)-pantothenate + AMP + diphosphate + H(+). It participates in cofactor biosynthesis; (R)-pantothenate biosynthesis; (R)-pantothenate from (R)-pantoate and beta-alanine: step 1/1. In terms of biological role, catalyzes the condensation of pantoate with beta-alanine in an ATP-dependent reaction via a pantoyl-adenylate intermediate. The chain is Pantothenate synthetase from Akkermansia muciniphila (strain ATCC BAA-835 / DSM 22959 / JCM 33894 / BCRC 81048 / CCUG 64013 / CIP 107961 / Muc).